A 267-amino-acid polypeptide reads, in one-letter code: NAD-capped RNA hydrolase NudC (267 aa).

Arg70 lines the substrate pocket. Cys99 and Cys102 together coordinate Zn(2+). Glu112 contacts substrate. Residues Cys117 and Cys122 each contribute to the Zn(2+) site. Tyr127 provides a ligand contact to substrate. One can recognise a Nudix hydrolase domain in the interval 128 to 257 (PVICPSIIVA…TIARALIEAT (130 aa)). A divalent metal cation contacts are provided by Ala166, Glu182, and Glu186. The Nudix box signature appears at 167-188 (GFVEVGESFEQTIHREVFEETG). 200–207 (QPWAFPNS) serves as a coordination point for substrate. An a divalent metal cation-binding site is contributed by Glu227. Residue Ala250 coordinates substrate.

Belongs to the Nudix hydrolase family. NudC subfamily. Homodimer. The cofactor is Mg(2+). Requires Mn(2+) as cofactor. Zn(2+) is required as a cofactor.

The enzyme catalyses a 5'-end NAD(+)-phospho-ribonucleoside in mRNA + H2O = a 5'-end phospho-adenosine-phospho-ribonucleoside in mRNA + beta-nicotinamide D-ribonucleotide + 2 H(+). It carries out the reaction NAD(+) + H2O = beta-nicotinamide D-ribonucleotide + AMP + 2 H(+). The catalysed reaction is NADH + H2O = reduced beta-nicotinamide D-ribonucleotide + AMP + 2 H(+). In terms of biological role, mRNA decapping enzyme that specifically removes the nicotinamide adenine dinucleotide (NAD) cap from a subset of mRNAs by hydrolyzing the diphosphate linkage to produce nicotinamide mononucleotide (NMN) and 5' monophosphate mRNA. The NAD-cap is present at the 5'-end of some mRNAs and stabilizes RNA against 5'-processing. Has preference for mRNAs with a 5'-end purine. Catalyzes the hydrolysis of a broad range of dinucleotide pyrophosphates. The sequence is that of NAD-capped RNA hydrolase NudC from Mannheimia succiniciproducens (strain KCTC 0769BP / MBEL55E).